We begin with the raw amino-acid sequence, 480 residues long: Adenosylhomocysteinase (480 aa).

Residues Thr-63, Asp-142, and Glu-203 each contribute to the substrate site. Residue 204–206 participates in NAD(+) binding; it reads TTT. The substrate site is built by Lys-233 and Asp-237. NAD(+)-binding positions include Asn-238, 267 to 272, Glu-290, Asn-325, 346 to 348, and Asn-394; these read GYGDVG and IGH.

The protein belongs to the adenosylhomocysteinase family. NAD(+) is required as a cofactor.

It localises to the cytoplasm. It catalyses the reaction S-adenosyl-L-homocysteine + H2O = L-homocysteine + adenosine. The protein operates within amino-acid biosynthesis; L-homocysteine biosynthesis; L-homocysteine from S-adenosyl-L-homocysteine: step 1/1. Functionally, may play a key role in the regulation of the intracellular concentration of adenosylhomocysteine. This Xylella fastidiosa (strain M12) protein is Adenosylhomocysteinase.